The chain runs to 328 residues: Anthranilate phosphoribosyltransferase (328 aa).

5-phospho-alpha-D-ribose 1-diphosphate is bound by residues G79, G82–D83, T87, N89–T92, K107–S115, and S119. G79 is an anthranilate binding site. S91 contributes to the Mg(2+) binding site. Anthranilate is bound at residue N110. R165 provides a ligand contact to anthranilate. Mg(2+) is bound by residues D223 and E224.

It belongs to the anthranilate phosphoribosyltransferase family. As to quaternary structure, homodimer. The cofactor is Mg(2+).

The catalysed reaction is N-(5-phospho-beta-D-ribosyl)anthranilate + diphosphate = 5-phospho-alpha-D-ribose 1-diphosphate + anthranilate. It functions in the pathway amino-acid biosynthesis; L-tryptophan biosynthesis; L-tryptophan from chorismate: step 2/5. Functionally, catalyzes the transfer of the phosphoribosyl group of 5-phosphorylribose-1-pyrophosphate (PRPP) to anthranilate to yield N-(5'-phosphoribosyl)-anthranilate (PRA). This is Anthranilate phosphoribosyltransferase from Cytophaga hutchinsonii (strain ATCC 33406 / DSM 1761 / CIP 103989 / NBRC 15051 / NCIMB 9469 / D465).